The primary structure comprises 260 residues: Dehydrogenase/reductase SDR family member 11 (260 aa).

Residues 1-30 (MARPGMERWRDRLALVTGASGGIGAAVARA) form the signal peptide. Residues 18-23 (GASGGI), 43-44 (RT), E49, 70-71 (DL), and N97 each bind NADP(+). S151 and Y166 together coordinate substrate. NADP(+) is bound by residues Y166, K170, 201–204 (VETQ), and K208. The active-site Proton acceptor is the Y166.

Belongs to the short-chain dehydrogenases/reductases (SDR) family. Homotetramer. Isoform 1: Ubiquitously expressed, with highest levels in testis, small intestine, colon, kidney, brain and heart. Isoform 3: Expressed in brain, heart and skeletal muscle.

The protein localises to the secreted. It carries out the reaction a 3beta-hydroxysteroid + NADP(+) = a 3-oxosteroid + NADPH + H(+). The catalysed reaction is 17beta-estradiol + NAD(+) = estrone + NADH + H(+). The enzyme catalyses 17beta-estradiol + NADP(+) = estrone + NADPH + H(+). Its pathway is steroid biosynthesis; estrogen biosynthesis. Its activity is regulated as follows. Inhibited by flavonoids including apigenin, luteolin, genistein, kaempferol and quercetin and also by carbenoxolone, zearalenone, glycyrrhetinic, curcumin and flufenamic acid. In terms of biological role, catalyzes the conversion of the 17-keto group of estrone, 4- and 5-androstenes and 5-alpha-androstanes into their 17-beta-hydroxyl metabolites and the conversion of the 3-keto group of 3-, 3,17- and 3,20- diketosteroids into their 3-hydroxyl metabolites. Exhibits reductive 3-beta-hydroxysteroid dehydrogenase activity toward 5-beta-androstanes, 5-beta-pregnanes, 4-pregnenes and bile acids. May also reduce endogenous and exogenous alpha-dicarbonyl compounds and xenobiotic alicyclic ketones. The chain is Dehydrogenase/reductase SDR family member 11 (DHRS11) from Homo sapiens (Human).